Reading from the N-terminus, the 459-residue chain is uncharacterized protein (459 aa).

The disordered stretch occupies residues 28-47; that stretch reads AHDEELTGPPQKPAYAAKPA. The 180-residue stretch at 35–214 folds into the FAD-binding PCMH-type domain; sequence GPPQKPAYAA…TEVIVKLHPR (180 aa).

Belongs to the oxygen-dependent FAD-linked oxidoreductase family. FAD is required as a cofactor.

This is an uncharacterized protein from Mycobacterium tuberculosis (strain CDC 1551 / Oshkosh).